The chain runs to 714 residues: Interferon-induced GTP-binding protein Mx2 (714 aa).

The tract at residues 1–89 is disordered; sequence MSMSYRALKF…QRSKGSENNL (89 aa). 2 stretches are compositionally biased toward polar residues: residues 61-70 and 79-88; these read NNFNQLNLDP and QQRSKGSENN. The 272-residue stretch at 115-386 folds into the Dynamin-type G domain; that stretch reads DLALPAIAVI…LIWHINKSLP (272 aa). A G1 motif region spans residues 125–132; it reads GDQSSGKS. Residue 125–132 coordinates GTP; it reads GDQSSGKS. The tract at residues 150–152 is G2 motif; the sequence is ITR. The segment at 224–227 is G3 motif; the sequence is DLPG. GTP contacts are provided by residues 224-228 and 293-296; these read DLPGI and TKPD. Positions 293 to 296 are G4 motif; it reads TKPD. The G5 motif stretch occupies residues 325–328; the sequence is KCRG. A GED domain is found at 622–713; that stretch reads IVEIGVHLNA…ALYEFPHFKS (92 aa).

The protein belongs to the TRAFAC class dynamin-like GTPase superfamily. Dynamin/Fzo/YdjA family.

It is found in the cytoplasm. The protein resides in the nucleus. Interferon-induced dynamin-like GTPase with antiviral activity. In Ovis aries (Sheep), this protein is Interferon-induced GTP-binding protein Mx2 (MX2).